Consider the following 310-residue polypeptide: tRNA dimethylallyltransferase (310 aa).

Glycine 13–threonine 20 lines the ATP pocket. Threonine 15–threonine 20 lines the substrate pocket. Interaction with substrate tRNA regions lie at residues aspartate 38–leucine 41, glutamine 162–arginine 166, arginine 243–arginine 248, and lysine 276–arginine 283.

This sequence belongs to the IPP transferase family. In terms of assembly, monomer. It depends on Mg(2+) as a cofactor.

The enzyme catalyses adenosine(37) in tRNA + dimethylallyl diphosphate = N(6)-dimethylallyladenosine(37) in tRNA + diphosphate. In terms of biological role, catalyzes the transfer of a dimethylallyl group onto the adenine at position 37 in tRNAs that read codons beginning with uridine, leading to the formation of N6-(dimethylallyl)adenosine (i(6)A). In Vibrio campbellii (strain ATCC BAA-1116), this protein is tRNA dimethylallyltransferase.